The sequence spans 323 residues: Aspartate carbamoyltransferase catalytic subunit (323 aa).

2 residues coordinate carbamoyl phosphate: R71 and T72. K99 contacts L-aspartate. Residues R121, H151, and Q154 each contribute to the carbamoyl phosphate site. 2 residues coordinate L-aspartate: R184 and R239. The carbamoyl phosphate site is built by G280 and P281.

The protein belongs to the aspartate/ornithine carbamoyltransferase superfamily. ATCase family. Heterododecamer (2C3:3R2) of six catalytic PyrB chains organized as two trimers (C3), and six regulatory PyrI chains organized as three dimers (R2).

The catalysed reaction is carbamoyl phosphate + L-aspartate = N-carbamoyl-L-aspartate + phosphate + H(+). The protein operates within pyrimidine metabolism; UMP biosynthesis via de novo pathway; (S)-dihydroorotate from bicarbonate: step 2/3. Functionally, catalyzes the condensation of carbamoyl phosphate and aspartate to form carbamoyl aspartate and inorganic phosphate, the committed step in the de novo pyrimidine nucleotide biosynthesis pathway. This Cupriavidus taiwanensis (strain DSM 17343 / BCRC 17206 / CCUG 44338 / CIP 107171 / LMG 19424 / R1) (Ralstonia taiwanensis (strain LMG 19424)) protein is Aspartate carbamoyltransferase catalytic subunit.